The primary structure comprises 282 residues: ABC transporter I family member 21 (282 aa).

The ABC transporter domain maps to 13–248 (IRVSGMQFSY…KTSPNLLSVV (236 aa)). ATP is bound at residue 46–53 (GANGSGKT).

It belongs to the ABC transporter superfamily. ABCI family. As to expression, expressed in root elongating zone and root meristem, as well as in elongating etiolated hypocotyls.

The protein resides in the cytoplasm. This is ABC transporter I family member 21 (ABCI21) from Arabidopsis thaliana (Mouse-ear cress).